A 394-amino-acid chain; its full sequence is Nicotinate phosphoribosyltransferase (394 aa).

Position 218 is a phosphohistidine; by autocatalysis (H218).

Belongs to the NAPRTase family. In terms of processing, transiently phosphorylated on a His residue during the reaction cycle. Phosphorylation strongly increases the affinity for substrates and increases the rate of nicotinate D-ribonucleotide production. Dephosphorylation regenerates the low-affinity form of the enzyme, leading to product release.

It catalyses the reaction nicotinate + 5-phospho-alpha-D-ribose 1-diphosphate + ATP + H2O = nicotinate beta-D-ribonucleotide + ADP + phosphate + diphosphate. It functions in the pathway cofactor biosynthesis; NAD(+) biosynthesis; nicotinate D-ribonucleotide from nicotinate: step 1/1. Its function is as follows. Catalyzes the synthesis of beta-nicotinate D-ribonucleotide from nicotinate and 5-phospho-D-ribose 1-phosphate at the expense of ATP. This Xylella fastidiosa (strain Temecula1 / ATCC 700964) protein is Nicotinate phosphoribosyltransferase.